A 355-amino-acid polypeptide reads, in one-letter code: Heterogeneous nuclear ribonucleoprotein D0 (355 aa).

Positions Met1–Ala92 are disordered. N-acetylserine is present on Ser2. 2 stretches are compositionally biased toward low complexity: residues Ala11–Gly20 and Glu27–Gly42. Over residues Ser43–Gly58 the composition is skewed to gly residues. Residues Glu64–Asn73 are compositionally biased toward basic and acidic residues. The residue at position 71 (Ser71) is a Phosphoserine. Lys72 participates in a covalent cross-link: Glycyl lysine isopeptide (Lys-Gly) (interchain with G-Cter in SUMO2). A phosphoserine mark is found at Ser80, Ser82, and Ser83. Thr91 carries the post-translational modification Phosphothreonine. RRM domains follow at residues Trp97–Glu179 and Lys182–Glu261. An N6-methyllysine modification is found at Lys119. Residue Thr127 is modified to Phosphothreonine. Lys129 participates in a covalent cross-link: Glycyl lysine isopeptide (Lys-Gly) (interchain with G-Cter in SUMO2). At Lys165 the chain carries N6-acetyllysine. Residue Ser190 is modified to Phosphoserine. Thr193 bears the Phosphothreonine mark. Lys197 is covalently cross-linked (Glycyl lysine isopeptide (Lys-Gly) (interchain with G-Cter in SUMO2)). N6-acetyllysine occurs at positions 243 and 251. The residue at position 263 (Tyr263) is an Omega-N-methylarginine. Ser271 is subject to Phosphoserine. Arg272 carries the omega-N-methylarginine modification. An N6-acetyllysine modification is found at Gly273. An omega-N-methylarginine mark is found at Arg278, Arg280, and Arg282. N6-acetyllysine is present on Gln292. Arg345 is modified (asymmetric dimethylarginine; alternate). At Arg345 the chain carries Dimethylated arginine; alternate. At Arg345 the chain carries Omega-N-methylarginine; alternate.

Identified in a IGF2BP1-dependent mRNP granule complex containing untranslated mRNAs. Part of a complex associated with the FOS mCRD domain and consisting of PABPC1, PAIP1, CSDE1/UNR and SYNCRIP. Interacts with IGF2BP2. Interacts with GTPBP1. Interacts with EIF4G1; the interaction requires RNA. Interacts with EIF3B and RPS3. Arg-345 is dimethylated, probably to asymmetric dimethylarginine. In terms of processing, methylated by PRMT1, in an insulin-dependent manner. The PRMT1-mediated methylation regulates tyrosine phosphorylation.

It is found in the nucleus. It localises to the cytoplasm. In terms of biological role, binds with high affinity to RNA molecules that contain AU-rich elements (AREs) found within the 3'-UTR of many proto-oncogenes and cytokine mRNAs. Also binds to double- and single-stranded DNA sequences in a specific manner and functions a transcription factor. Each of the RNA-binding domains specifically can bind solely to a single-stranded non-monotonous 5'-UUAG-3' sequence and also weaker to the single-stranded 5'-TTAGGG-3' telomeric DNA repeat. Binds RNA oligonucleotides with 5'-UUAGGG-3' repeats more tightly than the telomeric single-stranded DNA 5'-TTAGGG-3' repeats. Binding of RRM1 to DNA inhibits the formation of DNA quadruplex structure which may play a role in telomere elongation. May be involved in translationally coupled mRNA turnover. Implicated with other RNA-binding proteins in the cytoplasmic deadenylation/translational and decay interplay of the FOS mRNA mediated by the major coding-region determinant of instability (mCRD) domain. May play a role in the regulation of the rhythmic expression of circadian clock core genes. Directly binds to the 3'UTR of CRY1 mRNA and induces CRY1 rhythmic translation. May also be involved in the regulation of PER2 translation. This is Heterogeneous nuclear ribonucleoprotein D0 (HNRNPD) from Homo sapiens (Human).